A 671-amino-acid polypeptide reads, in one-letter code: DNA ligase (671 aa).

Residues 32–36 (DAEYD), 81–82 (SL), and Glu-113 each bind NAD(+). Catalysis depends on Lys-115, which acts as the N6-AMP-lysine intermediate. Positions 136, 173, 290, and 314 each coordinate NAD(+). Cys-408, Cys-411, Cys-426, and Cys-432 together coordinate Zn(2+). A BRCT domain is found at 593–671 (EIDSPFAGKT…EAEMIRLLGA (79 aa)).

It belongs to the NAD-dependent DNA ligase family. LigA subfamily. Mg(2+) serves as cofactor. The cofactor is Mn(2+).

It catalyses the reaction NAD(+) + (deoxyribonucleotide)n-3'-hydroxyl + 5'-phospho-(deoxyribonucleotide)m = (deoxyribonucleotide)n+m + AMP + beta-nicotinamide D-nucleotide.. Its function is as follows. DNA ligase that catalyzes the formation of phosphodiester linkages between 5'-phosphoryl and 3'-hydroxyl groups in double-stranded DNA using NAD as a coenzyme and as the energy source for the reaction. It is essential for DNA replication and repair of damaged DNA. The sequence is that of DNA ligase from Salmonella paratyphi C (strain RKS4594).